Consider the following 253-residue polypeptide: tRNA (guanine-N(1)-)-methyltransferase (253 aa).

Residues glycine 116 and 136-141 (VGDYIL) contribute to the S-adenosyl-L-methionine site.

Belongs to the RNA methyltransferase TrmD family. As to quaternary structure, homodimer.

Its subcellular location is the cytoplasm. It carries out the reaction guanosine(37) in tRNA + S-adenosyl-L-methionine = N(1)-methylguanosine(37) in tRNA + S-adenosyl-L-homocysteine + H(+). Its function is as follows. Specifically methylates guanosine-37 in various tRNAs. The sequence is that of tRNA (guanine-N(1)-)-methyltransferase from Colwellia psychrerythraea (strain 34H / ATCC BAA-681) (Vibrio psychroerythus).